A 277-amino-acid polypeptide reads, in one-letter code: MEFIKITEQPSLYDDLDKKSVKEILEDINTEDHKVADAVQKAIPQIEKLVTLIIPRVKKGGRIFYMGAGTSGRLGVLDASEIPPTFGMPPTVVIGLIAGGDTALRNPVENAEDDMSRGWEELLQHHINSEDTVIGIAASGTTPYVIGAMRTAREHGILTGCITSNPNSPMATEADVPIEVIVGPEYVTGSSRMKSGTAQKMILNMISTTIMIELGRVQGNKMVNMQLSNQKLIDRGTRMIIEELHLDYEKAEALLLLHGSVKSAIEAYRRHNSTQQE.

Residues 53 to 216 (IIPRVKKGGR…STTIMIELGR (164 aa)) enclose the SIS domain. Residue Glu81 is the Proton donor of the active site. Glu112 is a catalytic residue.

Belongs to the GCKR-like family. MurNAc-6-P etherase subfamily. Homodimer.

The catalysed reaction is N-acetyl-D-muramate 6-phosphate + H2O = N-acetyl-D-glucosamine 6-phosphate + (R)-lactate. It functions in the pathway amino-sugar metabolism; N-acetylmuramate degradation. Functionally, specifically catalyzes the cleavage of the D-lactyl ether substituent of MurNAc 6-phosphate, producing GlcNAc 6-phosphate and D-lactate. This chain is N-acetylmuramic acid 6-phosphate etherase, found in Bacteroides thetaiotaomicron (strain ATCC 29148 / DSM 2079 / JCM 5827 / CCUG 10774 / NCTC 10582 / VPI-5482 / E50).